A 258-amino-acid chain; its full sequence is Imidazole glycerol phosphate synthase subunit HisF (258 aa).

Residues Asp-11 and Asp-130 contribute to the active site.

Belongs to the HisA/HisF family. As to quaternary structure, heterodimer of HisH and HisF.

The protein resides in the cytoplasm. It carries out the reaction 5-[(5-phospho-1-deoxy-D-ribulos-1-ylimino)methylamino]-1-(5-phospho-beta-D-ribosyl)imidazole-4-carboxamide + L-glutamine = D-erythro-1-(imidazol-4-yl)glycerol 3-phosphate + 5-amino-1-(5-phospho-beta-D-ribosyl)imidazole-4-carboxamide + L-glutamate + H(+). It functions in the pathway amino-acid biosynthesis; L-histidine biosynthesis; L-histidine from 5-phospho-alpha-D-ribose 1-diphosphate: step 5/9. Functionally, IGPS catalyzes the conversion of PRFAR and glutamine to IGP, AICAR and glutamate. The HisF subunit catalyzes the cyclization activity that produces IGP and AICAR from PRFAR using the ammonia provided by the HisH subunit. This chain is Imidazole glycerol phosphate synthase subunit HisF, found in Haemophilus influenzae (strain 86-028NP).